A 126-amino-acid chain; its full sequence is Small ribosomal subunit protein uS13 (126 aa).

Residues 96-126 (PVRGQRTRTNARTRRGSRRTVAGKKKPAAKK) form a disordered region. Residues 100–126 (QRTRTNARTRRGSRRTVAGKKKPAAKK) are compositionally biased toward basic residues.

Belongs to the universal ribosomal protein uS13 family. As to quaternary structure, part of the 30S ribosomal subunit. Forms a loose heterodimer with protein S19. Forms two bridges to the 50S subunit in the 70S ribosome.

Its function is as follows. Located at the top of the head of the 30S subunit, it contacts several helices of the 16S rRNA. In the 70S ribosome it contacts the 23S rRNA (bridge B1a) and protein L5 of the 50S subunit (bridge B1b), connecting the 2 subunits; these bridges are implicated in subunit movement. Contacts the tRNAs in the A and P-sites. This chain is Small ribosomal subunit protein uS13, found in Thermosynechococcus vestitus (strain NIES-2133 / IAM M-273 / BP-1).